The primary structure comprises 95 residues: Embryonic abundant protein 1 (95 aa).

The span at 1–10 (MASGQQQQGR) shows a compositional bias: polar residues. Positions 1 to 95 (MASGQQQQGR…IDESKYKTKS (95 aa)) are disordered. Composition is skewed to basic and acidic residues over residues 40–64 (AEGR…EMGR) and 75–95 (GGER…KTKS).

The protein belongs to the small hydrophilic plant seed protein family. Expressed in dry seeds and immature embryos.

Em protein may act as a cytoplasm protectant during desiccation. The protein is Embryonic abundant protein 1 (EMP1) of Oryza sativa subsp. japonica (Rice).